The chain runs to 93 residues: Small ribosomal subunit protein uS19 (93 aa).

This sequence belongs to the universal ribosomal protein uS19 family.

Protein S19 forms a complex with S13 that binds strongly to the 16S ribosomal RNA. This is Small ribosomal subunit protein uS19 from Nitratidesulfovibrio vulgaris (strain ATCC 29579 / DSM 644 / CCUG 34227 / NCIMB 8303 / VKM B-1760 / Hildenborough) (Desulfovibrio vulgaris).